Reading from the N-terminus, the 68-residue chain is uncharacterized protein (68 aa).

The disordered stretch occupies residues 1 to 20 (MYKQKKKNHPFQCKKKKKKK). Residues 27-44 (IKLLFNYFLFFNFIITTF) form a helical membrane-spanning segment.

It is found in the membrane. This is an uncharacterized protein from Dictyostelium discoideum (Social amoeba).